We begin with the raw amino-acid sequence, 115 residues long: Putative ethidium bromide resistance protein (115 aa).

Transmembrane regions (helical) follow at residues 4–21 (WLFL…TSAL), 30–47 (LAPS…FYFL), 58–79 (VAYA…WLLH), and 85–104 (AWGF…ARSP).

The protein belongs to the drug/metabolite transporter (DMT) superfamily. Small multidrug resistance (SMR) (TC 2.A.7.1) family.

The protein localises to the cell membrane. Its function is as follows. One of the determinants for resistance to ethidium bromide and quaternary ammonium compounds. In Escherichia coli, this protein is Putative ethidium bromide resistance protein (ebr).